The sequence spans 505 residues: Aspartyl/glutamyl-tRNA(Asn/Gln) amidotransferase subunit B (505 aa).

This sequence belongs to the GatB/GatE family. GatB subfamily. As to quaternary structure, heterotrimer of A, B and C subunits.

The catalysed reaction is L-glutamyl-tRNA(Gln) + L-glutamine + ATP + H2O = L-glutaminyl-tRNA(Gln) + L-glutamate + ADP + phosphate + H(+). It catalyses the reaction L-aspartyl-tRNA(Asn) + L-glutamine + ATP + H2O = L-asparaginyl-tRNA(Asn) + L-glutamate + ADP + phosphate + 2 H(+). Functionally, allows the formation of correctly charged Asn-tRNA(Asn) or Gln-tRNA(Gln) through the transamidation of misacylated Asp-tRNA(Asn) or Glu-tRNA(Gln) in organisms which lack either or both of asparaginyl-tRNA or glutaminyl-tRNA synthetases. The reaction takes place in the presence of glutamine and ATP through an activated phospho-Asp-tRNA(Asn) or phospho-Glu-tRNA(Gln). This is Aspartyl/glutamyl-tRNA(Asn/Gln) amidotransferase subunit B from Streptomyces avermitilis (strain ATCC 31267 / DSM 46492 / JCM 5070 / NBRC 14893 / NCIMB 12804 / NRRL 8165 / MA-4680).